The sequence spans 121 residues: Small ribosomal subunit protein uS13 (121 aa).

The segment at Val-97–Lys-121 is disordered. Over residues Gln-100–Lys-121 the composition is skewed to basic residues.

The protein belongs to the universal ribosomal protein uS13 family. As to quaternary structure, part of the 30S ribosomal subunit. Forms a loose heterodimer with protein S19. Forms two bridges to the 50S subunit in the 70S ribosome.

Located at the top of the head of the 30S subunit, it contacts several helices of the 16S rRNA. In the 70S ribosome it contacts the 23S rRNA (bridge B1a) and protein L5 of the 50S subunit (bridge B1b), connecting the 2 subunits; these bridges are implicated in subunit movement. Contacts the tRNAs in the A and P-sites. This is Small ribosomal subunit protein uS13 from Prochlorococcus marinus (strain NATL2A).